The sequence spans 820 residues: Probable ATP-dependent RNA helicase DDX23 (820 aa).

A compositionally biased stretch (basic and acidic residues) spans M1–K42. Residues M1–S244 form a disordered region. 2 positions are modified to phosphoserine: S14 and S16. Over residues D43–S65 the composition is skewed to basic residues. A compositionally biased stretch (basic and acidic residues) spans K66–R105. S107 and S109 each carry phosphoserine. 3 stretches are compositionally biased toward basic and acidic residues: residues R112 to P137, L147 to N226, and G233 to S244. The short motif at R391–R419 is the Q motif element. In terms of domain architecture, Helicase ATP-binding spans I422–V627. A435–T442 provides a ligand contact to ATP. Residues D549–D552 carry the DEAD box motif. In terms of domain architecture, Helicase C-terminal spans K651–P799. Residues K686 and K811 each participate in a glycyl lysine isopeptide (Lys-Gly) (interchain with G-Cter in SUMO2) cross-link.

This sequence belongs to the DEAD box helicase family. DDX23/PRP28 subfamily. In terms of assembly, the phosphorylated form (by SRPK2) is a component of the U4/U6-U5 tri-snRNP complex composed of the U4, U6 and U5 snRNAs and at least PRPF3, PRPF4, PRPF6, PRPF8, PRPF31, SNRNP200, TXNL4A, WDR57, SNRNP40, DDX23, CD2BP2, PPIH, SNU13, EFTUD2, SART1 and USP39. Identified in the spliceosome C complex. Interacts with ERBB4. Interacts with ERCC6. Post-translationally, in vitro phosphorylated by CLK1 and U1 snRNP-associated protein kinase. Phosphorylated by SRPK2 and this phosphorylation is required for its association with the tri-snRNP (U4/U6-U5 tri-small nuclear ribonucleoproteins) and subsequent spliceosomal B complex formation. May be phosphorylated by SRPK2 on Ser residues in the SR domain; the phosphorylation is required for the removal of inappropriate R-loops during transcription.

Its subcellular location is the nucleus. The protein localises to the chromosome. The enzyme catalyses ATP + H2O = ADP + phosphate + H(+). Its function is as follows. Involved in pre-mRNA splicing and its phosphorylated form (by SRPK2) is required for spliceosomal B complex formation. Independently of its spliceosome formation function, required for the suppression of incorrect R-loops formed during transcription; R-loops are composed of a DNA:RNA hybrid and the associated non-template single-stranded DNA. This Homo sapiens (Human) protein is Probable ATP-dependent RNA helicase DDX23.